Reading from the N-terminus, the 279-residue chain is Eukaryotic translation initiation factor 3 subunit G (279 aa).

Disordered stretches follow at residues 1-26 (MSTG…IANP), 66-115 (RKNW…KAHE), and 152-171 (TPSG…AAGA). Residue S78 is modified to Phosphoserine. Residues 102-115 (KQDEKKEEEDKAHE) are compositionally biased toward basic and acidic residues. Low complexity predominate over residues 152–163 (TPSGTTPEPTSE). An RRM domain is found at 197–276 (TTLKVSQLNS…LILHLEWSKK (80 aa)).

This sequence belongs to the eIF-3 subunit G family. As to quaternary structure, component of the eukaryotic translation initiation factor 3 (eIF-3) complex.

The protein resides in the cytoplasm. Its function is as follows. RNA-binding component of the eukaryotic translation initiation factor 3 (eIF-3) complex, which is involved in protein synthesis of a specialized repertoire of mRNAs and, together with other initiation factors, stimulates binding of mRNA and methionyl-tRNAi to the 40S ribosome. The eIF-3 complex specifically targets and initiates translation of a subset of mRNAs involved in cell proliferation. This subunit can bind 18S rRNA. In Candida albicans (strain SC5314 / ATCC MYA-2876) (Yeast), this protein is Eukaryotic translation initiation factor 3 subunit G.